The primary structure comprises 377 residues: Bacterial actin-related protein (377 aa).

Belongs to the actin family.

Functionally, may be a dominant-negative inhibitor of eukaryotic actin polymerization. The polypeptide is Bacterial actin-related protein (barP) (Haliangium ochraceum (strain DSM 14365 / JCM 11303 / SMP-2)).